Consider the following 309-residue polypeptide: Tumor necrosis factor ligand superfamily member 13B (309 aa).

At methionine 1–arginine 47 the chain is on the cytoplasmic side. The helical; Signal-anchor for type II membrane protein transmembrane segment at leucine 48 to tyrosine 68 threads the bilayer. At glutamine 69 to leucine 309 the chain is on the extracellular side. The interval proline 110–leucine 140 is disordered. Residues asparagine 117 and asparagine 266 are each glycosylated (N-linked (GlcNAc...) asparagine). Over residues asparagine 117 to arginine 126 the composition is skewed to basic residues. The THD domain occupies aspartate 169–leucine 308. Cysteine 256 and cysteine 269 are oxidised to a cystine.

Belongs to the tumor necrosis factor family. In terms of assembly, homotrimer. Isoform 2 heteromultimerizes with isoform 1, probably limiting the amount of functional isoform 1 on the cell surface. Post-translationally, the soluble form derives from the membrane form by proteolytic processing. Isoform 2 is not efficiently shed from the membrane unlike isoform 1. As to expression, isoform 2 is expressed in many myeloid cell lines.

The protein localises to the cell membrane. Its subcellular location is the secreted. Functionally, cytokine that binds to TNFRSF13B/TACI and TNFRSF17/BCMA. TNFSF13/APRIL binds to the same 2 receptors. Together, they form a 2 ligands -2 receptors pathway involved in the stimulation of B- and T-cell function and the regulation of humoral immunity. A third B-cell specific BAFF-receptor (BAFFR/BR3) promotes the survival of mature B-cells and the B-cell response. Its function is as follows. Isoform 2 seems to inhibit isoform 1 secretion and bioactivity. In Mus musculus (Mouse), this protein is Tumor necrosis factor ligand superfamily member 13B (Tnfsf13b).